The chain runs to 193 residues: Probable thymidylate kinase (193 aa).

ATP is bound at residue 7–14; it reads GIDGSGKT.

It belongs to the thymidylate kinase family.

It catalyses the reaction dTMP + ATP = dTDP + ADP. In Pyrobaculum calidifontis (strain DSM 21063 / JCM 11548 / VA1), this protein is Probable thymidylate kinase.